A 239-amino-acid polypeptide reads, in one-letter code: Ribosomal RNA large subunit methyltransferase E (239 aa).

The tract at residues 1 to 20 (MTKAPIAGNRTGRKLGQRVK) is disordered. Over residues 11-20 (TGRKLGQRVK) the composition is skewed to basic residues. Residues Gly-81, Trp-83, Asp-104, Asp-120, and Asp-144 each coordinate S-adenosyl-L-methionine. The active-site Proton acceptor is Lys-184.

The protein belongs to the class I-like SAM-binding methyltransferase superfamily. RNA methyltransferase RlmE family.

The protein resides in the cytoplasm. It catalyses the reaction uridine(2552) in 23S rRNA + S-adenosyl-L-methionine = 2'-O-methyluridine(2552) in 23S rRNA + S-adenosyl-L-homocysteine + H(+). In terms of biological role, specifically methylates the uridine in position 2552 of 23S rRNA at the 2'-O position of the ribose in the fully assembled 50S ribosomal subunit. The protein is Ribosomal RNA large subunit methyltransferase E of Rhizobium leguminosarum bv. trifolii (strain WSM2304).